Here is a 734-residue protein sequence, read N- to C-terminus: Photosystem I P700 chlorophyll a apoprotein A2 (734 aa).

8 helical membrane-spanning segments follow: residues I46–A69, L135–Q158, L175–I199, I273–Y291, L330–Y353, A369–I395, A417–H439, and F517–V535. [4Fe-4S] cluster-binding residues include C559 and C568. Transmembrane regions (helical) follow at residues A575 to W596 and L643 to I665. H654, M662, and Y670 together coordinate chlorophyll a. W671 is a binding site for phylloquinone. Residues L707–A727 traverse the membrane as a helical segment.

Belongs to the PsaA/PsaB family. As to quaternary structure, the PsaA/B heterodimer binds the P700 chlorophyll special pair and subsequent electron acceptors. PSI consists of a core antenna complex that captures photons, and an electron transfer chain that converts photonic excitation into a charge separation. The eukaryotic PSI reaction center is composed of at least 11 subunits. It depends on P700 is a chlorophyll a/chlorophyll a' dimer, A0 is one or more chlorophyll a, A1 is one or both phylloquinones and FX is a shared 4Fe-4S iron-sulfur center. as a cofactor.

It is found in the plastid. The protein localises to the chloroplast thylakoid membrane. It catalyses the reaction reduced [plastocyanin] + hnu + oxidized [2Fe-2S]-[ferredoxin] = oxidized [plastocyanin] + reduced [2Fe-2S]-[ferredoxin]. In terms of biological role, psaA and PsaB bind P700, the primary electron donor of photosystem I (PSI), as well as the electron acceptors A0, A1 and FX. PSI is a plastocyanin-ferredoxin oxidoreductase, converting photonic excitation into a charge separation, which transfers an electron from the donor P700 chlorophyll pair to the spectroscopically characterized acceptors A0, A1, FX, FA and FB in turn. Oxidized P700 is reduced on the lumenal side of the thylakoid membrane by plastocyanin. This Jasminum nudiflorum (Winter jasmine) protein is Photosystem I P700 chlorophyll a apoprotein A2.